The following is a 366-amino-acid chain: Ferredoxin--NADP reductase, leaf isozyme 2, chloroplastic (366 aa).

Residues M1–R48 constitute a chloroplast transit peptide. The FAD-binding FR-type domain occupies K87–M209. FAD is bound by residues R145–S148, C166–K168, Y172, and V183–S185. Residues S148 and K168 each contribute to the NADP(+) site. The cysteines at positions 184 and 189 are disulfide-linked. S185 carries the phosphoserine modification. Phosphothreonine is present on T216. FAD is bound at residue T224. NADP(+) is bound by residues T224, V256–P257, S286–R287, K296, G325–L326, and E364.

It belongs to the ferredoxin--NADP reductase type 1 family. In terms of assembly, heterodimer with LFNR1. Component of high molecular weight thylakoid LFNRs-containing protein complexes containing LIR1, LFNR1, LFNR2, TIC62 and TROL proteins. Interacts directly with LIR1 and TIC62; LIR1 increases the affinity of LFNR1 and LFNR2 for TIC62. The cofactor is FAD. In terms of processing, may form interchain disulfide bonds with LIR1.

It localises to the plastid. Its subcellular location is the chloroplast stroma. It is found in the chloroplast thylakoid membrane. The enzyme catalyses 2 reduced [2Fe-2S]-[ferredoxin] + NADP(+) + H(+) = 2 oxidized [2Fe-2S]-[ferredoxin] + NADPH. It functions in the pathway energy metabolism; photosynthesis. Its function is as follows. Plays a key role in regulating the relative amounts of cyclic and non-cyclic electron flow to meet the demands of the plant for ATP and reducing power. This chain is Ferredoxin--NADP reductase, leaf isozyme 2, chloroplastic, found in Oryza sativa subsp. japonica (Rice).